The primary structure comprises 342 residues: N-acetyl-gamma-glutamyl-phosphate reductase (342 aa).

The active site involves Cys-148.

It belongs to the NAGSA dehydrogenase family. Type 1 subfamily.

The protein localises to the cytoplasm. The catalysed reaction is N-acetyl-L-glutamate 5-semialdehyde + phosphate + NADP(+) = N-acetyl-L-glutamyl 5-phosphate + NADPH + H(+). It functions in the pathway amino-acid biosynthesis; L-arginine biosynthesis; N(2)-acetyl-L-ornithine from L-glutamate: step 3/4. Its function is as follows. Catalyzes the NADPH-dependent reduction of N-acetyl-5-glutamyl phosphate to yield N-acetyl-L-glutamate 5-semialdehyde. The protein is N-acetyl-gamma-glutamyl-phosphate reductase of Methanococcus vannielii (strain ATCC 35089 / DSM 1224 / JCM 13029 / OCM 148 / SB).